A 256-amino-acid polypeptide reads, in one-letter code: Dihydromonacolin L-[lovastatin nonaketide synthase] thioesterase (256 aa).

Residues S122, D201, and H229 each act as charge relay system in the active site.

Belongs to the LovG family.

It catalyses the reaction dihydromonacolin L-[lovastatin nonaketide synthase] + H2O = holo-[lovastatin nonaketide synthase] + dihydromonacolin L carboxylate + H(+). It functions in the pathway polyketide biosynthesis; lovastatin biosynthesis. Functionally, esterase; part of the gene cluster that mediates the biosynthesis of lovastatin (also known as mevinolin, mevacor or monacolin K), a hypolipidemic inhibitor of (3S)-hydroxymethylglutaryl-coenzyme A (HMG-CoA) reductase (HMGR). The first step in the biosynthesis of lovastatin is the production of dihydromonacolin L acid by the lovastatin nonaketide synthase lovB and the trans-acting enoyl reductase lovC via condensation of one acetyl-CoA unit and 8 malonyl-CoA units. Dihydromonacolin L acid is released from lovB by the thioesterase lovG. Next, dihydromonacolin L acid is oxidized by the dihydromonacolin L monooxygenase lovA twice to form monacolin J acid. The 2-methylbutyrate moiety of lovastatin is synthesized by the lovastatin diketide synthase lovF via condensation of one acetyl-CoA unit and one malonyl-CoA unit. Finally, the covalent attachment of this moiety to monacolin J acid is catalyzed by the transesterase lovD to yield lovastatin. LovD has broad substrate specificity and can also convert monacolin J to simvastatin using alpha-dimethylbutanoyl-S-methyl-3-mercaptopropionate (DMB-S-MMP) as the thioester acyl donor, and can also catalyze the reverse reaction and function as hydrolase in vitro. LovD has much higher activity with LovF-bound 2-methylbutanoate than with free diketide substrates. Esterase that catalyzes the release of covalently bound dihydromonacolin L from LovB during lovastatin biosynthesis. The chain is Dihydromonacolin L-[lovastatin nonaketide synthase] thioesterase from Aspergillus terreus.